A 275-amino-acid chain; its full sequence is Peptidoglycan-N-acetylglucosamine deacetylase BC_1960 (275 aa).

The region spanning 81 to 262 (AEVALTFDDG…QLKTKGARFV (182 aa)) is the NodB homology domain. Asp88 acts as the Proton acceptor in catalysis. 3 residues coordinate Zn(2+): Asp89, His139, and His143. At Pro179 the chain carries 2-hydroxyproline; partial. His233 serves as the catalytic Proton donor.

This sequence belongs to the polysaccharide deacetylase family. It depends on Zn(2+) as a cofactor. Post-translationally, hydroxylated on Pro-179. Hydroxylation alters the active site and enhances significantly deacetylase activity, probably by creating a more favorable environment for transition-state stabilization. It might be autocatalytic.

It carries out the reaction peptidoglycan-N-acetyl-D-glucosamine + H2O = peptidoglycan-D-glucosamine + acetate.. Deacetylase activity is stimulated by hydroxylation on Pro-179. Inhibited by CuCl(2) and ZnCl(2). Inhibited by the hydroxamate N-hydroxy-4-(naphthalene-1-yl)benzamide (NHNB). Functionally, catalyzes the deacetylation of N-acetylglucosamine (GlcNAc) residues in peptidoglycan. Also acts on soluble chitin substrates and N-acetylchitooligomers. Acts on cell wall peptidoglycan from the Gram-positive bacteria B.cereus and B.subtilis and the Gram-negative bacterium H.pylori. Not active on acetylated xylan. The sequence is that of Peptidoglycan-N-acetylglucosamine deacetylase BC_1960 from Bacillus cereus (strain ATCC 14579 / DSM 31 / CCUG 7414 / JCM 2152 / NBRC 15305 / NCIMB 9373 / NCTC 2599 / NRRL B-3711).